Reading from the N-terminus, the 119-residue chain is Large ribosomal subunit protein uL14c (119 aa).

Belongs to the universal ribosomal protein uL14 family. Part of the 50S ribosomal subunit.

The protein resides in the plastid. It localises to the chloroplast. In terms of biological role, binds to 23S rRNA. This chain is Large ribosomal subunit protein uL14c, found in Ostreococcus tauri.